A 311-amino-acid polypeptide reads, in one-letter code: Malate dehydrogenase (311 aa).

NAD(+) contacts are provided by residues Gly7–Gly13 and Asp34. Substrate-binding residues include Arg81 and Arg87. NAD(+) is bound by residues Asn94 and Ile117 to Asn119. Substrate-binding residues include Asn119 and Arg153. Residue His177 is the Proton acceptor of the active site. Met227 is a binding site for NAD(+).

Belongs to the LDH/MDH superfamily. MDH type 1 family. In terms of assembly, homodimer.

It carries out the reaction (S)-malate + NAD(+) = oxaloacetate + NADH + H(+). In terms of biological role, catalyzes the reversible oxidation of malate to oxaloacetate. The sequence is that of Malate dehydrogenase from Shewanella baltica (strain OS223).